The chain runs to 238 residues: 7-cyano-7-deazaguanine synthase (238 aa).

10–20 (LSGGLDSSTVL) provides a ligand contact to ATP. The Zn(2+) site is built by cysteine 190, cysteine 198, cysteine 201, and cysteine 204.

This sequence belongs to the QueC family. Zn(2+) is required as a cofactor.

The catalysed reaction is 7-carboxy-7-deazaguanine + NH4(+) + ATP = 7-cyano-7-deazaguanine + ADP + phosphate + H2O + H(+). It functions in the pathway purine metabolism; 7-cyano-7-deazaguanine biosynthesis. Functionally, catalyzes the ATP-dependent conversion of 7-carboxy-7-deazaguanine (CDG) to 7-cyano-7-deazaguanine (preQ(0)). In Thermoplasma acidophilum (strain ATCC 25905 / DSM 1728 / JCM 9062 / NBRC 15155 / AMRC-C165), this protein is 7-cyano-7-deazaguanine synthase.